The sequence spans 142 residues: ATP synthase epsilon chain (142 aa).

Belongs to the ATPase epsilon chain family. As to quaternary structure, F-type ATPases have 2 components, CF(1) - the catalytic core - and CF(0) - the membrane proton channel. CF(1) has five subunits: alpha(3), beta(3), gamma(1), delta(1), epsilon(1). CF(0) has three main subunits: a, b and c.

The protein localises to the cell inner membrane. Its function is as follows. Produces ATP from ADP in the presence of a proton gradient across the membrane. The protein is ATP synthase epsilon chain of Shewanella loihica (strain ATCC BAA-1088 / PV-4).